A 510-amino-acid chain; its full sequence is Leucine-rich repeat protein lrrA (510 aa).

LRR repeat units follow at residues 14-34 (YRKR…PPTI), 35-59 (GALQ…IGKL), 60-82 (SKVE…IGSL), 84-106 (TLKQ…NIGA), 107-130 (LKNL…ISNC), 132-152 (ALEY…EFGK), 153-176 (LYNL…ISGW), 177-200 (VKLE…CLLG), 202-222 (LSTL…LSSM), 224-245 (SLTN…LSNL), 246-270 (RQLK…LLSE), 272-292 (IELD…IATL), 293-315 (INLQ…VGNL), 316-340 (INLQ…IGKL), 341-363 (VNLK…IASM), 365-386 (ALKE…IGEL), 387-408 (SGLT…SFGN), 410-432 (SELQ…LDGL), 433-458 (KSCT…LIGL), and 460-478 (ILDV…IVMK).

The protein localises to the cytoplasm. Its function is as follows. Involved in cytoskeleton remodeling, which is needed for normal chemotactic aggregation and efficient cell sorting during multicellular morphogenesis. The polypeptide is Leucine-rich repeat protein lrrA (lrrA) (Dictyostelium discoideum (Social amoeba)).